Reading from the N-terminus, the 258-residue chain is Phosphate import ATP-binding protein PstB (258 aa).

Residues 5-247 enclose the ABC transporter domain; that stretch reads IETKDLDIYY…ERIFSNPKEK (243 aa). 37–44 provides a ligand contact to ATP; that stretch reads GPSGCGKS.

It belongs to the ABC transporter superfamily. Phosphate importer (TC 3.A.1.7) family. The complex is composed of two ATP-binding proteins (PstB), two transmembrane proteins (PstC and PstA) and a solute-binding protein (PstS).

It is found in the cell membrane. The enzyme catalyses phosphate(out) + ATP + H2O = ADP + 2 phosphate(in) + H(+). Functionally, part of the ABC transporter complex PstSACB involved in phosphate import. Responsible for energy coupling to the transport system. This chain is Phosphate import ATP-binding protein PstB, found in Cutibacterium acnes (strain DSM 16379 / KPA171202) (Propionibacterium acnes).